Here is a 703-residue protein sequence, read N- to C-terminus: Pinin (703 aa).

An N-acetylalanine modification is found at A2. Residues 2–32 (AVAVRTLQEQLEKAKESLKNVDENIRKLTGR) adopt a coiled-coil conformation. The segment at 46–148 (ALSGPGGGRG…ETPERPGPIF (103 aa)) is disordered. At S48 the chain carries Phosphoserine. The residue at position 54 (R54) is an Omega-N-methylarginine. A phosphoserine mark is found at S58, S66, S96, and S100. A compositionally biased stretch (basic and acidic residues) spans 87 to 100 (GGERRTRRESRQES). Residue K109 forms a Glycyl lysine isopeptide (Lys-Gly) (interchain with G-Cter in SUMO2) linkage. Phosphoserine is present on residues S114 and S115. A Glycyl lysine isopeptide (Lys-Gly) (interchain with G-Cter in SUMO2) cross-link involves residue K121. T125 is subject to Phosphothreonine. Residues K138 and K157 each participate in a glycyl lysine isopeptide (Lys-Gly) (interchain with G-Cter in SUMO2) cross-link. K159 is covalently cross-linked (Glycyl lysine isopeptide (Lys-Gly) (interchain with G-Cter in SUMO1); alternate). K159 participates in a covalent cross-link: Glycyl lysine isopeptide (Lys-Gly) (interchain with G-Cter in SUMO2); alternate. The stretch at 165–236 (ATERQKRRQE…HNAKIIKYIR (72 aa)) forms a coiled coil. The segment at 223-285 (EWNEHNAKII…AEQINKMEAR (63 aa)) is sufficient for PSAP complex assembly. K230 is covalently cross-linked (Glycyl lysine isopeptide (Lys-Gly) (interchain with G-Cter in SUMO2)). The residue at position 240 (K240) is an N6-acetyllysine; alternate. Residue K240 is modified to N6-succinyllysine; alternate. Glycyl lysine isopeptide (Lys-Gly) (interchain with G-Cter in SUMO2) cross-links involve residues K281, K306, and K313. Disordered regions lie at residues 284–314 (ARPRRQSMKEKEHQVVVRNEEQKSEQEEGKV), 331–394 (RVGT…EEVM), and 408–703 (AEQE…PGQL). Basic and acidic residues-rich tracts occupy residues 348-357 (EIPIVHSDAE) and 366-386 (KQEMEVKMEEETEVRESEKQQ). At S354 the chain carries Phosphoserine. Positions 354-411 (SDAEKEQEEEEQKQEMEVKMEEETEVRESEKQQDSQPEEVMDVLEMVESVKNVIAEQE) form a coiled coil. Residues K366 and K372 each participate in a glycyl lysine isopeptide (Lys-Gly) (interchain with G-Cter in SUMO2) cross-link. 2 positions are modified to phosphoserine: S382 and S388. A compositionally biased stretch (basic and acidic residues) spans 417–433 (QVERVEPSENEASKELE). Phosphoserine is present on residues S450 and S457. Over residues 479-489 (PMAQPQAQSLP) the composition is skewed to low complexity. Residues K541 and K549 each participate in a glycyl lysine isopeptide (Lys-Gly) (interchain with G-Cter in SUMO2) cross-link. S565 carries the post-translational modification Phosphoserine. K566 is covalently cross-linked (Glycyl lysine isopeptide (Lys-Gly) (interchain with G-Cter in SUMO2)). Over residues 572 to 588 (RSRSRGRARNRTSKSRS) the composition is skewed to basic residues. Residues 589–642 (RSSSSSSSSSSSTSSSSGSSSSSGSSSSRTSSSSSSTSGSSSRDSSSSTTSSSE) show a composition bias toward low complexity. Over residues 646–664 (RSRGRGHNRDRKHRRSVDR) the composition is skewed to basic residues. Over residues 665–676 (KRRDASGLERSH) the composition is skewed to basic and acidic residues. Phosphoserine is present on residues S670 and S691.

Belongs to the pinin family. As to quaternary structure, found in a mRNA splicing-dependent exon junction complex (EJC). Found in a complex with SR proteins. Found in a mRNP complex with RNPS1. Component of the PSAP complex consisting of RNPS1, SAP18 and PNN. Interacts with PNISR, CTBP1, CTBP2, KRT8, KRT18, KRT19, PS1D/PNO40, PPIG, RNPS1, SFRS4 and SRRM2. Identified in the spliceosome C complex.

It localises to the nucleus speckle. It is found in the cell junction. The protein resides in the desmosome. Its function is as follows. Transcriptional activator binding to the E-box 1 core sequence of the E-cadherin promoter gene; the core-binding sequence is 5'CAGGTG-3'. Capable of reversing CTBP1-mediated transcription repression. Auxiliary component of the splicing-dependent multiprotein exon junction complex (EJC) deposited at splice junction on mRNAs. The EJC is a dynamic structure consisting of core proteins and several peripheral nuclear and cytoplasmic associated factors that join the complex only transiently either during EJC assembly or during subsequent mRNA metabolism. Participates in the regulation of alternative pre-mRNA splicing. Associates to spliced mRNA within 60 nt upstream of the 5'-splice sites. Component of the PSAP complex which binds RNA in a sequence-independent manner and is proposed to be recruited to the EJC prior to or during the splicing process and to regulate specific excision of introns in specific transcription subsets. Involved in the establishment and maintenance of epithelia cell-cell adhesion. The protein is Pinin (PNN) of Bos taurus (Bovine).